The sequence spans 169 residues: Large ribosomal subunit protein uL10 (169 aa).

It belongs to the universal ribosomal protein uL10 family. As to quaternary structure, part of the ribosomal stalk of the 50S ribosomal subunit. The N-terminus interacts with L11 and the large rRNA to form the base of the stalk. The C-terminus forms an elongated spine to which L12 dimers bind in a sequential fashion forming a multimeric L10(L12)X complex.

In terms of biological role, forms part of the ribosomal stalk, playing a central role in the interaction of the ribosome with GTP-bound translation factors. This chain is Large ribosomal subunit protein uL10, found in Rickettsia typhi (strain ATCC VR-144 / Wilmington).